Consider the following 402-residue polypeptide: Eukaryotic initiation factor 4A (402 aa).

The Q motif signature appears at 29-57; that stretch reads ESFDDMELKEELLRGIYGFGFEKPSAIQK. The region spanning 60 to 230 is the Helicase ATP-binding domain; sequence IVPCTTGKDV…NRFMRNPIRI (171 aa). 73-80 provides a ligand contact to ATP; sequence AQSGTGKT. Positions 178 to 181 match the DEAD box motif; sequence DEAD. In terms of domain architecture, Helicase C-terminal spans 241–402; sequence GIRQFYINVQ…EMPESIADLI (162 aa).

The protein belongs to the DEAD box helicase family. eIF4A subfamily. In terms of assembly, eIF4F is a multi-subunit complex, the composition of which varies with external and internal environmental conditions. It is composed of at least EIF4A, EIF4E and EIF4G.

It carries out the reaction ATP + H2O = ADP + phosphate + H(+). ATP-dependent RNA helicase which is a subunit of the eIF4F complex involved in cap recognition and is required for mRNA binding to ribosome. In the current model of translation initiation, eIF4A unwinds RNA secondary structures in the 5'-UTR of mRNAs which is necessary to allow efficient binding of the small ribosomal subunit, and subsequent scanning for the initiator codon. The polypeptide is Eukaryotic initiation factor 4A (inf-1) (Caenorhabditis elegans).